The chain runs to 1858 residues: MATLTDRTYLPPLEDCLTGRTVILSWRLVASALEDADLARLTSPALSTFLRDGFVHELLKHPARVFEPKDLKQEFETKTSSIQTVAPGVDTIKKDALWLADAVAINQVAALRIVLIEYQTRAHSHLVLPLSTQDVANIQEAAGVGDAHASSILSLLNPASAVDAETMWCDFETEARRRERILATYLSERRSFTAAVDALVTFLLHSAPGQHKDLDSLRRALLKDAFAFDEDLDVPDRSKLLTMAPTYMNLVEDCIARAQALPAKLGESFKTEAFELDWLRTAITEAVHSLSIAFQALDLDTPYFAPHELLSEWFELMNSSLFLESILGFEVVADLAMPARSLVSAICLKMLNIDRTIQFLHDFDYPDGEEPYLLSSQTLNKIHTAVTNAVNSGVAASLPVAFAWSLIVHQMHLGYQERAERRDLLVNQRAQAGFELEFQPSASTPNRRRRNSAGSIVSLEASPYDDFLREQRLDNDIAPVEQIAMLATSRGQVYQVMSEMALCLGTTHEAAFRPAVGARARLVFQDLLKRSAYLIPYQDEPVFSLLAILATGRQYWDVTDALSASSLNQVYTDMLDDETLFTQFTMQAINRFPYEFNPFSVLCRVLAAALITNKDKADVVTGWLWRTPTLTVDWNPAWDRSYELCFEDENTNSFRLTRDVDLFGSASPARPRHLAAEERFIIPEGTLGRFVTDVGRTARLEFEHSALALLGKRLEVKAAEEICDSGMAPLDVDEQAEAVAMLATVLRAESLKSTAKGGDPEAPLKFLKEASRLLPHNKDILTVISDTIDGLVEKELLELDGPQIAVLASCLQFLHAALAVCPGRVWAYMSRCALIAGDARPGRLSRITGSLDMYAERFDLLSSAVKLFAALIDSAACSAVQRRAGSTALVSVRSAVENPWLGTSEKILSRVALAIAQAALDVYESTTTWRFRSELDRSILVRDVVGLMHKLVVHAHTLSSHLTSTLSPAAAHIISSFLTPPPSASSLRFQPLLGTLLVALITPRATLYPGQSRILAERVTSVLAFCTSLLRAADFLGQTHIPLQTHLFQSACLLARLPAANAVYRAPVLELLRALVEVAGRAANGSGEPPSLLGYLGSHAARSFISLVEGIDKPFGRVEHAVVTWRFFAAVIRNRQQWMAGCLLTGRTPREALKGGGEQKIERKVGEGSVLAAAMERLREVKSLDVQEAVAVMDFVVSAQNYWPWTIFAVRKEKEVVDALRGYVRGLKAPGMVMKTDGAAAAAFQARIAAYVAETFAMQLYHMRQMRQAEKFAGELVADLDYFLREGVMVWGYNASLHGNFARNFAKRFPGVEVDDFKRTMWLPRELGKGYYYALEVAEQMLGFDAGWGGVKQSGFRKEMETANLNLSLVEAQVSLFHAWEYLLLELTLSLLPKKENAAFARQVLQVVEQCLEANQRSQPPENIFVVLGHARAGLALTLLQRLADANQLPRDVTHLLALVSSAIHAVENPFGANDLPYFRTLLKILFVVLRAAKQGTAKPGESNVAITQQVLTILDRVVARCFRALAALVHEQQQNATDGTTTAPEDLALITAILQACLSVPGIEQCQVQVLNIMAAHDVFQVAVALFSWADRLLPANPSPASSSTSTSATNPASGDPVYGELALLFLLELSALPALAEHLACDGLLGHLAAARLAGYMRRTNVGPFAENAGAARCYAIWAKCLLPLLLNILAALGSTVAPEVAWVLNQFPNLLQSSVERIEPPGFSRPTLSLASTPPRQKFISLLEISEIHSLALLTRVLAACRAQNARDVPEVTWDGAKVLECVEYWLRGRKVLRERLVPLGPREVEWRGMVATGGVVGVAGDGGEGCENRLEEKAVGLLVGVREVLEGGLEGEGE.

Belongs to the Nup188 family. As to quaternary structure, component of the nuclear pore complex (NPC). NPC constitutes the exclusive means of nucleocytoplasmic transport. NPCs allow the passive diffusion of ions and small molecules and the active, nuclear transport receptor-mediated bidirectional transport of macromolecules such as proteins, RNAs, ribonucleoparticles (RNPs), and ribosomal subunits across the nuclear envelope. Due to its 8-fold rotational symmetry, all subunits are present with 8 copies or multiples thereof. Part of a tetrameric NUP188-NUP170-NIC96-NUP53 module.

The protein localises to the nucleus. It localises to the nuclear pore complex. Its subcellular location is the nucleus membrane. Functions as a component of the nuclear pore complex (NPC). NPC components, collectively referred to as nucleoporins (NUPs), can play the role of both NPC structural components and of docking or interaction partners for transiently associated nuclear transport factors. NUP188 probably plays an important role in NPC assembly and organization. The chain is Nucleoporin NUP188 (NUP188) from Chaetomium thermophilum (strain DSM 1495 / CBS 144.50 / IMI 039719) (Thermochaetoides thermophila).